The following is a 282-amino-acid chain: Pantothenate synthetase (282 aa).

30 to 37 (MGYLHEGH) is an ATP binding site. H37 serves as the catalytic Proton donor. A (R)-pantoate-binding site is contributed by Q61. Q61 serves as a coordination point for beta-alanine. Residue 147–150 (GMKD) participates in ATP binding. Q153 lines the (R)-pantoate pocket. Residues V176 and 184–187 (KSSR) each bind ATP.

It belongs to the pantothenate synthetase family. In terms of assembly, homodimer.

It localises to the cytoplasm. It catalyses the reaction (R)-pantoate + beta-alanine + ATP = (R)-pantothenate + AMP + diphosphate + H(+). It participates in cofactor biosynthesis; (R)-pantothenate biosynthesis; (R)-pantothenate from (R)-pantoate and beta-alanine: step 1/1. Functionally, catalyzes the condensation of pantoate with beta-alanine in an ATP-dependent reaction via a pantoyl-adenylate intermediate. The polypeptide is Pantothenate synthetase (Bacillus cereus (strain ATCC 14579 / DSM 31 / CCUG 7414 / JCM 2152 / NBRC 15305 / NCIMB 9373 / NCTC 2599 / NRRL B-3711)).